We begin with the raw amino-acid sequence, 63 residues long: Large ribosomal subunit protein uL29 (63 aa).

Belongs to the universal ribosomal protein uL29 family.

The sequence is that of Large ribosomal subunit protein uL29 from Pseudoalteromonas translucida (strain TAC 125).